Here is a 300-residue protein sequence, read N- to C-terminus: MKIAILSRDGTLYSCKRLREAAIQRGHLVEILDPLSCYMNINPAASSIHYKGRKLPHFDAVIPRIGTAITFYGTAALRQFEMLGSYPLNESVAIARARDKLRSMQLLARQGIDLPVTGIAHSPDDTSDLIDMVGGAPLVVKLVEGTQGIGVVLAETRQAAESVIDAFRGLNAHILVQEYIKEAQGCDIRCLVVGDEVVAAIERRAKEGDFRSNLHRGGAASVASITPQEREIAIKAARTMALDVAGVDILRANRGPLVMEVNASPGLEGIEKTTGIDIAGKMIRWIERYATTEYCLKTGG.

The ATP-grasp domain occupies 104–287 (MQLLARQGID…IAGKMIRWIE (184 aa)). Residues Lys-141, 178 to 179 (EY), Asp-187, and 211 to 213 (RSN) each bind ATP. Residues Asp-248, Glu-260, and Asn-262 each contribute to the Mg(2+) site. Residues Asp-248, Glu-260, and Asn-262 each coordinate Mn(2+).

This sequence belongs to the RimK family. It depends on Mg(2+) as a cofactor. Requires Mn(2+) as cofactor.

In terms of biological role, an L-glutamate ligase that catalyzes the ATP-dependent post-translational addition of glutamate residues to the C-terminus of ribosomal protein bS6 (RpsF). Is also able to catalyze the synthesis of poly-alpha-glutamate in vitro, via ATP hydrolysis from unprotected glutamate as substrate. The number of glutamate residues added to either RpsF or to poly-alpha-glutamate changes with pH. The sequence is that of Ribosomal protein bS6--L-glutamate ligase from Shigella boydii serotype 18 (strain CDC 3083-94 / BS512).